The following is a 325-amino-acid chain: Syntaxin-16 (325 aa).

The Cytoplasmic portion of the chain corresponds to 1–301 (MATRRLTDAF…AEQYQKKNRK (301 aa)). At S41 the chain carries Phosphoserine. The 63-residue stretch at 230-292 (TLMVEERERE…EDGLKQLHKA (63 aa)) folds into the t-SNARE coiled-coil homology domain. Residues 302-322 (MLVILILFVIIIVLIVVLVGV) traverse the membrane as a helical; Anchor for type IV membrane protein segment. The Vesicular portion of the chain corresponds to 323 to 325 (KSR).

This sequence belongs to the syntaxin family. Interacts with GCC2. Interacts with BAIAP3; this interaction is increased in the presence of calcium. As to expression, ubiquitous.

It localises to the golgi apparatus membrane. The protein resides in the cytoplasm. SNARE involved in vesicular transport from the late endosomes to the trans-Golgi network. The sequence is that of Syntaxin-16 (STX16) from Homo sapiens (Human).